The following is a 119-amino-acid chain: Large ribosomal subunit protein uL22 (119 aa).

The protein belongs to the universal ribosomal protein uL22 family. In terms of assembly, part of the 50S ribosomal subunit.

Its function is as follows. This protein binds specifically to 23S rRNA; its binding is stimulated by other ribosomal proteins, e.g. L4, L17, and L20. It is important during the early stages of 50S assembly. It makes multiple contacts with different domains of the 23S rRNA in the assembled 50S subunit and ribosome. Functionally, the globular domain of the protein is located near the polypeptide exit tunnel on the outside of the subunit, while an extended beta-hairpin is found that lines the wall of the exit tunnel in the center of the 70S ribosome. The sequence is that of Large ribosomal subunit protein uL22 from Tropheryma whipplei (strain TW08/27) (Whipple's bacillus).